The following is a 309-amino-acid chain: High-affinity zinc uptake system protein AztC (309 aa).

Positions 1–24 (MKDWLFRIATCSIMTFSSLAAAQA) are cleaved as a signal peptide. Histidine 61 is a binding site for Zn(2+). The segment at 117–132 (GGGHYHYIDGKAVFHA) is D-loop. Zn(2+) is bound at residue histidine 138. An intrachain disulfide couples cysteine 158 to cysteine 165. Histidine 204 contributes to the Zn(2+) binding site. The Z-loop stretch occupies residues 222–229 (QGVSTESE). Position 279 (aspartate 279) interacts with Zn(2+).

Belongs to the bacterial solute-binding protein 9 family. Monomer.

Its subcellular location is the periplasm. Its function is as follows. Part of the ATP-binding cassette (ABC) transport system AztABCD involved in zinc import. Binds zinc with high affinity and specificity and delivers it to the membrane permease for translocation into the cytoplasm. The sequence is that of High-affinity zinc uptake system protein AztC from Paracoccus denitrificans (strain Pd 1222).